The chain runs to 661 residues: FAST kinase domain-containing protein 3, mitochondrial (661 aa).

The RAP domain maps to 592–650 (VALCIDGPQRFCLDSKHLLGKEATKQRHLRLLGYQVVQLPYHELELLTSRLELVDYLQR).

Belongs to the FAST kinase family. In terms of tissue distribution, expression detected in spleen, testis, colon, heart, smooth muscle, kidney, brain, lung, liver, brown and white adipose tissue with highest expression in testis and smooth muscle.

Its subcellular location is the mitochondrion. Functionally, required for normal mitochondrial respiration. Increases steady-state levels and half-lives of a subset of mature mitochondrial mRNAs MT-ND2, MT-ND3, MT-CYTB, MT-CO2, and MT-ATP8/6. Promotes MT-CO1 mRNA translation and increases mitochondrial complex IV assembly and activity. In Mus musculus (Mouse), this protein is FAST kinase domain-containing protein 3, mitochondrial (Fastkd3).